A 209-amino-acid chain; its full sequence is Probable glutathione peroxidase 8 (209 aa).

N-acetylmethionine is present on methionine 1. A helical transmembrane segment spans residues 18-40 (VFAVLLSIVLCTVTLFLLQLKFL). Residue cysteine 79 is part of the active site.

It belongs to the glutathione peroxidase family.

It is found in the membrane. The catalysed reaction is 2 glutathione + H2O2 = glutathione disulfide + 2 H2O. The sequence is that of Probable glutathione peroxidase 8 (GPX8) from Homo sapiens (Human).